The following is an 85-amino-acid chain: Large ribosomal subunit protein bL31B (85 aa).

The protein belongs to the bacterial ribosomal protein bL31 family. Type B subfamily. As to quaternary structure, part of the 50S ribosomal subunit.

In Clavibacter michiganensis subsp. michiganensis (strain NCPPB 382), this protein is Large ribosomal subunit protein bL31B.